Here is a 198-residue protein sequence, read N- to C-terminus: Phosphoheptose isomerase (198 aa).

Residues 34 to 196 (IVEALIRGNK…DDSLFPADHG (163 aa)) enclose the SIS domain. Residue 49 to 51 (NGG) participates in substrate binding. Zn(2+) contacts are provided by H58 and N62. Residues N62, 91–92 (ND), 117–119 (STS), S122, and Q172 each bind substrate. The Zn(2+) site is built by Q172 and H180.

The protein belongs to the SIS family. GmhA subfamily. Homotetramer. Requires Zn(2+) as cofactor.

It localises to the cytoplasm. The catalysed reaction is 2 D-sedoheptulose 7-phosphate = D-glycero-alpha-D-manno-heptose 7-phosphate + D-glycero-beta-D-manno-heptose 7-phosphate. It functions in the pathway carbohydrate biosynthesis; D-glycero-D-manno-heptose 7-phosphate biosynthesis; D-glycero-alpha-D-manno-heptose 7-phosphate and D-glycero-beta-D-manno-heptose 7-phosphate from sedoheptulose 7-phosphate: step 1/1. Functionally, catalyzes the isomerization of sedoheptulose 7-phosphate in D-glycero-D-manno-heptose 7-phosphate. In Alteromonas mediterranea (strain DSM 17117 / CIP 110805 / LMG 28347 / Deep ecotype), this protein is Phosphoheptose isomerase.